A 1693-amino-acid polypeptide reads, in one-letter code: 1-phosphatidylinositol 4,5-bisphosphate phosphodiesterase eta-1 (1693 aa).

The PH domain occupies 20–128 (SVMQSGTQMI…WITGLKYLMA (109 aa)). EF-hand domains are found at residues 142–177 (THDQ…LNVN), 178–214 (LPRR…MSLR), and 226–246 (DKKD…EQKM). Residues Asp155, Asn157, Asp159, and Glu166 each coordinate Ca(2+). A PI-PLC X-box domain is found at 299 to 444 (QDMDQPLCNY…LKGKILVKGK (146 aa)). His314 is an active-site residue. Residues Asn315, Glu344, and Asp346 each contribute to the Ca(2+) site. His358 is a catalytic residue. Glu393 contacts Ca(2+). Residues Lys442 and Lys444 each contribute to the substrate site. Residues 526–585 (LNAHLKQSPDVKESGKKSHGRSLMTNFGKHKKTTKSRSKSYSTDDEEDTQQSTGKEGGQL) form a disordered region. The span at 532-541 (QSPDVKESGK) shows a compositional bias: basic and acidic residues. Positions 553–563 (GKHKKTTKSRS) are enriched in basic residues. The PI-PLC Y-box domain occupies 601–714 (LSDLVVYTNS…GYVLKPQQMC (114 aa)). 2 residues coordinate substrate: Ser627 and Arg654. The region spanning 715 to 843 (KGTFNPFSGD…PGYRHVYLEG (129 aa)) is the C2 domain. Positions 758, 760, 784, 813, 814, and 815 each coordinate Ca(2+). Residues 992–1005 (IEGKENSLAEDKDG) show a composition bias toward basic and acidic residues. 4 disordered regions span residues 992 to 1014 (IEGK…ASIK), 1052 to 1089 (TGEQ…PKQH), 1300 to 1329 (LESN…ETLK), and 1578 to 1613 (LSSR…GAGV). Over residues 1065–1086 (RTTSNATSNCQENPCPSKSLSP) the composition is skewed to polar residues. Over residues 1592–1601 (RAKEKQEANK) the composition is skewed to basic and acidic residues.

It depends on Ca(2+) as a cofactor. In terms of tissue distribution, expressed in brain and to a lower extent in lung. In brain, it is found in cerebrum, cerebellum and spinal cord. In embryo expressed in the notochord, developing spinal cord (in a ventral to dorsal gradient), dorsal root ganglia, cerebellum and dermatomyosome.

It is found in the cytoplasm. The protein localises to the membrane. It catalyses the reaction a 1,2-diacyl-sn-glycero-3-phospho-(1D-myo-inositol-4,5-bisphosphate) + H2O = 1D-myo-inositol 1,4,5-trisphosphate + a 1,2-diacyl-sn-glycerol + H(+). Its function is as follows. The production of the second messenger molecules diacylglycerol (DAG) and inositol 1,4,5-trisphosphate (IP3) is mediated by calcium-activated phosphatidylinositol-specific phospholipase C enzymes. The chain is 1-phosphatidylinositol 4,5-bisphosphate phosphodiesterase eta-1 from Homo sapiens (Human).